The following is a 213-amino-acid chain: Uridine kinase (213 aa).

ATP is bound at residue 15-22; the sequence is GASASGKS.

This sequence belongs to the uridine kinase family.

The protein localises to the cytoplasm. The enzyme catalyses uridine + ATP = UMP + ADP + H(+). The catalysed reaction is cytidine + ATP = CMP + ADP + H(+). It participates in pyrimidine metabolism; CTP biosynthesis via salvage pathway; CTP from cytidine: step 1/3. Its pathway is pyrimidine metabolism; UMP biosynthesis via salvage pathway; UMP from uridine: step 1/1. The protein is Uridine kinase of Klebsiella pneumoniae (strain 342).